Reading from the N-terminus, the 413-residue chain is Putative competence-damage inducible protein (413 aa).

It belongs to the CinA family.

This is Putative competence-damage inducible protein from Thermoanaerobacter sp. (strain X514).